A 457-amino-acid chain; its full sequence is Adenylosuccinate synthetase isozyme 2 B (457 aa).

GTP-binding positions include 40-46 (GDEGKGK) and 68-70 (GHT). Asp41 serves as the catalytic Proton acceptor. Residues Asp41 and Gly68 each contribute to the Mg(2+) site. Asp41 contacts substrate. IMP-binding positions include 41-44 (DEGK), 66-69 (NAGH), Thr163, Arg177, Asn256, Thr271, and Arg335. Catalysis depends on His69, which acts as the Proton donor. Substrate is bound at residue 331–337 (VTTGRKR). GTP-binding positions include Arg337, 363-365 (KLD), and 445-448 (GVGK).

It belongs to the adenylosuccinate synthetase family. Homodimer. Requires Mg(2+) as cofactor.

The protein resides in the cytoplasm. It is found in the mitochondrion. The catalysed reaction is IMP + L-aspartate + GTP = N(6)-(1,2-dicarboxyethyl)-AMP + GDP + phosphate + 2 H(+). It functions in the pathway purine metabolism; AMP biosynthesis via de novo pathway; AMP from IMP: step 1/2. With respect to regulation, inhibited competitively by AMP and IMP and non-competitively by fructose 1,6-bisphosphate. Functionally, plays an important role in the de novo pathway and in the salvage pathway of purine nucleotide biosynthesis. Catalyzes the first committed step in the biosynthesis of AMP from IMP. This is Adenylosuccinate synthetase isozyme 2 B (adss2-b) from Xenopus tropicalis (Western clawed frog).